Reading from the N-terminus, the 582-residue chain is Formate--tetrahydrofolate ligase (582 aa).

65–72 (TPLGEGKT) is an ATP binding site.

Belongs to the formate--tetrahydrofolate ligase family.

The catalysed reaction is (6S)-5,6,7,8-tetrahydrofolate + formate + ATP = (6R)-10-formyltetrahydrofolate + ADP + phosphate. It functions in the pathway one-carbon metabolism; tetrahydrofolate interconversion. This Vibrio campbellii (strain ATCC BAA-1116) protein is Formate--tetrahydrofolate ligase.